Reading from the N-terminus, the 163-residue chain is Putative 4-hydroxy-4-methyl-2-oxoglutarate aldolase (163 aa).

Substrate is bound by residues 75–78 (GDQL) and Arg-97. Asp-98 contacts a divalent metal cation.

The protein belongs to the class II aldolase/RraA-like family. Homotrimer. A divalent metal cation serves as cofactor.

It catalyses the reaction 4-hydroxy-4-methyl-2-oxoglutarate = 2 pyruvate. It carries out the reaction oxaloacetate + H(+) = pyruvate + CO2. Its function is as follows. Catalyzes the aldol cleavage of 4-hydroxy-4-methyl-2-oxoglutarate (HMG) into 2 molecules of pyruvate. Also contains a secondary oxaloacetate (OAA) decarboxylase activity due to the common pyruvate enolate transition state formed following C-C bond cleavage in the retro-aldol and decarboxylation reactions. This is Putative 4-hydroxy-4-methyl-2-oxoglutarate aldolase from Photobacterium profundum (strain SS9).